Consider the following 460-residue polypeptide: Putative 2,3-dihydroxypropane-1-sulfonate exporter (460 aa).

At Met-1–Lys-18 the chain is on the cytoplasmic side. A helical transmembrane segment spans residues Leu-19 to Leu-39. The Periplasmic segment spans residues Leu-40–Val-46. A helical transmembrane segment spans residues Leu-47–Phe-67. Over Thr-68 to Phe-91 the chain is Cytoplasmic. A helical transmembrane segment spans residues Val-92 to Phe-112. Topologically, residues Glu-113–Thr-122 are periplasmic. Residues Met-123 to Val-143 traverse the membrane as a helical segment. The Cytoplasmic portion of the chain corresponds to Pro-144–Gln-161. Residues Gly-162–Ile-182 form a helical membrane-spanning segment. Topologically, residues Glu-183–Tyr-190 are periplasmic. Residues Ile-191–Gly-211 traverse the membrane as a helical segment. Residues Val-212–Pro-242 lie on the Cytoplasmic side of the membrane. Residues Leu-243–Ile-263 form a helical membrane-spanning segment. The Periplasmic segment spans residues Gln-264–Pro-275. Residues Ile-276–Met-296 form a helical membrane-spanning segment. Residues Pro-297 to Lys-307 lie on the Cytoplasmic side of the membrane. The chain crosses the membrane as a helical span at residues Val-308–Gly-328. Position 329 (Gly-329) is a topological domain, periplasmic. A helical transmembrane segment spans residues Ser-330–Leu-350. Residues Asn-351–Gln-386 lie on the Cytoplasmic side of the membrane. The chain crosses the membrane as a helical span at residues Ala-387–Val-407. The Periplasmic segment spans residues Gln-408–Gln-418. Residues Leu-419 to Tyr-439 form a helical membrane-spanning segment. Residues Asn-440 to Val-460 are Cytoplasmic-facing.

This sequence belongs to the sodium:galactoside symporter (TC 2.A.2) family.

The protein localises to the cell inner membrane. Functionally, could be involved in the export of 2,3-dihydroxypropane-1-sulfonate (DHPS). This Salmonella typhimurium (strain LT2 / SGSC1412 / ATCC 700720) protein is Putative 2,3-dihydroxypropane-1-sulfonate exporter (yihP).